A 421-amino-acid polypeptide reads, in one-letter code: Probable acid phosphatase (421 aa).

Asp-229 serves as the catalytic Proton donor.

It catalyses the reaction a phosphate monoester + H2O = an alcohol + phosphate. The protein is Probable acid phosphatase of Kluyveromyces lactis (strain ATCC 8585 / CBS 2359 / DSM 70799 / NBRC 1267 / NRRL Y-1140 / WM37) (Yeast).